A 293-amino-acid chain; its full sequence is Large ribosomal subunit protein uL4c (293 aa).

A chloroplast-targeting transit peptide spans 1 to 50; it reads MATSTSSSLSLSFFSSSLFSSKSRNFSSKPILKLPSSSHSQTSLSLSIKS. Disordered regions lie at residues 107-138 and 259-293; these read EVRG…PGGG and YGVD…EPAE. Residues 116 to 126 show a composition bias toward basic residues; that stretch reads YPQKKTGRARR. Residues 263 to 293 show a composition bias toward acidic residues; sequence TLEDEDEEEEEEEEGEEVDDGVEDGTPEPAE.

Belongs to the universal ribosomal protein uL4 family. As to quaternary structure, component of the chloroplast large ribosomal subunit (LSU). Mature 70S chloroplast ribosomes of higher plants consist of a small (30S) and a large (50S) subunit. The 30S small subunit contains 1 molecule of ribosomal RNA (16S rRNA) and 24 different proteins. The 50S large subunit contains 3 rRNA molecules (23S, 5S and 4.5S rRNA) and 33 different proteins. As to expression, highly expressed in cotyledon and weakly in roots.

Its subcellular location is the plastid. The protein localises to the chloroplast. Component of the chloroplast ribosome (chloro-ribosome), a dedicated translation machinery responsible for the synthesis of chloroplast genome-encoded proteins, including proteins of the transcription and translation machinery and components of the photosynthetic apparatus. This is Large ribosomal subunit protein uL4c (RPL4) from Spinacia oleracea (Spinach).